The primary structure comprises 587 residues: Thiol:disulfide interchange protein DsbD 2 (587 aa).

The N-terminal stretch at 1–18 is a signal peptide; that stretch reads MRVLILLLMLLLPGLSQA. The Periplasmic segment spans residues 19-172; that stretch reads QPGDDLFAPR…SLQAGNLAWS (154 aa). 2 disulfide bridges follow: Cys124-Cys130 and Cys188-Cys308. Residues 173 to 193 traverse the membrane as a helical segment; it reads LLLFFGLGLLLAFAPCSLPML. Residues 194–216 lie on the Cytoplasmic side of the membrane; it reads PILAGLVVGSGAGPRRGLLLAGS. A helical membrane pass occupies residues 217-237; that stretch reads YVLSMALVYAGLGVVAALLGG. At 238-246 the chain is on the periplasmic side; the sequence is NLQAWLQQP. The chain crosses the membrane as a helical span at residues 247-267; it reads WLLGSFAALFVFLALPMFGFF. Over 268 to 299 the chain is Cytoplasmic; the sequence is ELQLPAALRDRLDGLSRGRKGGSLAGAAALGA. The chain crosses the membrane as a helical span at residues 300–320; the sequence is LSGLLVGPCMTAPLAGALLYI. Topologically, residues 321 to 330 are periplasmic; that stretch reads AQTGNALHGG. Residues 331 to 351 traverse the membrane as a helical segment; that stretch reads LVLFSLGLGIGMPLLLLVTVG. Residues 352 to 360 are Cytoplasmic-facing; sequence SRFLPKPGP. Residues 361–381 form a helical membrane-spanning segment; it reads WMNLVKGVFGFLFLGTAWILL. Residues 382 to 383 lie on the Periplasmic side of the membrane; that stretch reads RP. A helical transmembrane segment spans residues 384 to 404; sequence LLGEALWIGLGGALLLVLAYA. Topologically, residues 405–416 are cytoplasmic; the sequence is ALHTARGLARHA. The chain crosses the membrane as a helical span at residues 417 to 437; that stretch reads VLFGAAGCIFGLWGAAMLLGA. The Periplasmic segment spans residues 438 to 587; it reads AAGADDPWRP…AHWQATRERG (150 aa). The region spanning 448–585 is the Thioredoxin domain; sequence LQVYAAANRG…FLAHWQATRE (138 aa). A disulfide bridge links Cys500 with Cys503.

It belongs to the thioredoxin family. DsbD subfamily.

It is found in the cell inner membrane. It catalyses the reaction [protein]-dithiol + NAD(+) = [protein]-disulfide + NADH + H(+). The catalysed reaction is [protein]-dithiol + NADP(+) = [protein]-disulfide + NADPH + H(+). In terms of biological role, required to facilitate the formation of correct disulfide bonds in some periplasmic proteins and for the assembly of the periplasmic c-type cytochromes. Acts by transferring electrons from cytoplasmic thioredoxin to the periplasm. This transfer involves a cascade of disulfide bond formation and reduction steps. This Pseudomonas aeruginosa (strain ATCC 15692 / DSM 22644 / CIP 104116 / JCM 14847 / LMG 12228 / 1C / PRS 101 / PAO1) protein is Thiol:disulfide interchange protein DsbD 2.